A 310-amino-acid chain; its full sequence is Nodulation protein D 2 (310 aa).

Residues 6–63 enclose the HTH lysR-type domain; that stretch reads LDLNLLVALDALMTERKLTAAARRVKLSQPAMSAAIARLRTYFGDELFSMQGRELIPT. The H-T-H motif DNA-binding region spans 23–42; the sequence is LTAAARRVKLSQPAMSAAIA.

This sequence belongs to the LysR transcriptional regulatory family.

Its function is as follows. NodD regulates the expression of the nodABCFE genes which encode other nodulation proteins. NodD is also a negative regulator of its own expression. Binds flavonoids as inducers. In Rhizobium meliloti (strain 1021) (Ensifer meliloti), this protein is Nodulation protein D 2 (nodD2).